The following is a 1690-amino-acid chain: rRNA biogenesis protein rrp5 (1690 aa).

Disordered regions lie at residues 1–42 (MAGN…GASS) and 59–90 (FMES…ELDN). Polar residues predominate over residues 11–32 (ASEGSDSQGNERISSLSANEAT). Positions 72-83 (KTRPKKKGSKKS) are enriched in basic residues. 13 consecutive S1 motif domains span residues 109–209 (GSLI…LSLK), 226–289 (GSMI…LTAT), 306–376 (GDYI…VSFL), 398–473 (GFIV…LSFQ), 490–559 (GQFV…LTLK), 579–648 (GTQT…VGCR), 666–739 (GSVL…LSLK), 761–830 (GIKY…MSFK), 866–942 (GKIT…ISHR), 973–1044 (GDEV…IGPL), 1053–1122 (GSRL…LSAR), 1147–1216 (GDIC…MSLK), and 1236–1307 (GSNL…LGLK). The tract at residues 1313-1424 (SDSDISMSDN…EEKDLDEIPS (112 aa)) is disordered. Acidic residues-rich tracts occupy residues 1348-1367 (QSEE…EEEP), 1390-1400 (DTEDSEDEEDE), and 1412-1421 (FDDEEKDLDE). Threonine 1391 is modified (phosphothreonine). Residue serine 1394 is modified to Phosphoserine. 3 HAT repeats span residues 1420–1452 (DEIP…YHLN), 1526–1558 (GKVD…FLLN), and 1596–1628 (GDPE…MEMK). 2 positions are modified to phosphoserine: serine 1684 and serine 1686.

Component of the ribosomal small subunit (SSU) processome.

The protein localises to the nucleus. Its subcellular location is the nucleolus. In terms of biological role, involved in the biogenesis of rRNA. Required for the formation of 18S and 5.8S rRNA. The sequence is that of rRNA biogenesis protein rrp5 from Schizosaccharomyces pombe (strain 972 / ATCC 24843) (Fission yeast).